Consider the following 183-residue polypeptide: Acyl-homoserine-lactone synthase (183 aa).

This sequence belongs to the autoinducer synthase family.

The catalysed reaction is a fatty acyl-[ACP] + S-adenosyl-L-methionine = an N-acyl-L-homoserine lactone + S-methyl-5'-thioadenosine + holo-[ACP] + H(+). In terms of biological role, involved in the synthesis of the acyl-homoserine lactone (AHL) signal N-(3-hydroxydodecanoyl)-L-HSL (3-hydroxy-C(12)-HSL or OH-dDHL). Probably part of a quorum-sensing system with AnoR. The sequence is that of Acyl-homoserine-lactone synthase from Acinetobacter nosocomialis.